The following is a 277-amino-acid chain: Probable endonuclease 4 (277 aa).

Zn(2+)-binding residues include H70, H108, E145, D178, H181, H212, D225, H227, and E257.

Belongs to the AP endonuclease 2 family. Requires Zn(2+) as cofactor.

It catalyses the reaction Endonucleolytic cleavage to 5'-phosphooligonucleotide end-products.. Functionally, endonuclease IV plays a role in DNA repair. It cleaves phosphodiester bonds at apurinic or apyrimidinic (AP) sites, generating a 3'-hydroxyl group and a 5'-terminal sugar phosphate. The chain is Probable endonuclease 4 from Mycoplasmopsis pulmonis (strain UAB CTIP) (Mycoplasma pulmonis).